A 956-amino-acid chain; its full sequence is Bifunctional glutamine synthetase adenylyltransferase/adenylyl-removing enzyme (956 aa).

An adenylyl removase region spans residues 1–441 (MLPLSTPLLA…IFTQLIGDDS (441 aa)). The tract at residues 450–956 (HVPFKSLWLE…RRSWQQWLGE (507 aa)) is adenylyl transferase.

The protein belongs to the GlnE family. Mg(2+) serves as cofactor.

The enzyme catalyses [glutamine synthetase]-O(4)-(5'-adenylyl)-L-tyrosine + phosphate = [glutamine synthetase]-L-tyrosine + ADP. The catalysed reaction is [glutamine synthetase]-L-tyrosine + ATP = [glutamine synthetase]-O(4)-(5'-adenylyl)-L-tyrosine + diphosphate. Involved in the regulation of glutamine synthetase GlnA, a key enzyme in the process to assimilate ammonia. When cellular nitrogen levels are high, the C-terminal adenylyl transferase (AT) inactivates GlnA by covalent transfer of an adenylyl group from ATP to specific tyrosine residue of GlnA, thus reducing its activity. Conversely, when nitrogen levels are low, the N-terminal adenylyl removase (AR) activates GlnA by removing the adenylyl group by phosphorolysis, increasing its activity. The regulatory region of GlnE binds the signal transduction protein PII (GlnB) which indicates the nitrogen status of the cell. This chain is Bifunctional glutamine synthetase adenylyltransferase/adenylyl-removing enzyme, found in Photorhabdus laumondii subsp. laumondii (strain DSM 15139 / CIP 105565 / TT01) (Photorhabdus luminescens subsp. laumondii).